A 699-amino-acid chain; its full sequence is Elongation factor G (699 aa).

The tr-type G domain occupies 8–288 (EDYRNFGIMA…AVVDYLPSPL (281 aa)). GTP is bound by residues 17–24 (AHIDAGKT), 86–90 (DTPGH), and 140–143 (NKMD).

It belongs to the TRAFAC class translation factor GTPase superfamily. Classic translation factor GTPase family. EF-G/EF-2 subfamily.

The protein localises to the cytoplasm. In terms of biological role, catalyzes the GTP-dependent ribosomal translocation step during translation elongation. During this step, the ribosome changes from the pre-translocational (PRE) to the post-translocational (POST) state as the newly formed A-site-bound peptidyl-tRNA and P-site-bound deacylated tRNA move to the P and E sites, respectively. Catalyzes the coordinated movement of the two tRNA molecules, the mRNA and conformational changes in the ribosome. This is Elongation factor G from Rhizobium etli (strain CIAT 652).